We begin with the raw amino-acid sequence, 160 residues long: SsrA-binding protein (160 aa).

This sequence belongs to the SmpB family.

It localises to the cytoplasm. In terms of biological role, required for rescue of stalled ribosomes mediated by trans-translation. Binds to transfer-messenger RNA (tmRNA), required for stable association of tmRNA with ribosomes. tmRNA and SmpB together mimic tRNA shape, replacing the anticodon stem-loop with SmpB. tmRNA is encoded by the ssrA gene; the 2 termini fold to resemble tRNA(Ala) and it encodes a 'tag peptide', a short internal open reading frame. During trans-translation Ala-aminoacylated tmRNA acts like a tRNA, entering the A-site of stalled ribosomes, displacing the stalled mRNA. The ribosome then switches to translate the ORF on the tmRNA; the nascent peptide is terminated with the 'tag peptide' encoded by the tmRNA and targeted for degradation. The ribosome is freed to recommence translation, which seems to be the essential function of trans-translation. This Enterobacter sp. (strain 638) protein is SsrA-binding protein.